The primary structure comprises 67 residues: DNA-directed RNA polymerase subunit omega (67 aa).

It belongs to the RNA polymerase subunit omega family. The RNAP catalytic core consists of 2 alpha, 1 beta, 1 beta' and 1 omega subunit. When a sigma factor is associated with the core the holoenzyme is formed, which can initiate transcription.

It carries out the reaction RNA(n) + a ribonucleoside 5'-triphosphate = RNA(n+1) + diphosphate. Its function is as follows. Promotes RNA polymerase assembly. Latches the N- and C-terminal regions of the beta' subunit thereby facilitating its interaction with the beta and alpha subunits. The protein is DNA-directed RNA polymerase subunit omega of Leptothrix cholodnii (strain ATCC 51168 / LMG 8142 / SP-6) (Leptothrix discophora (strain SP-6)).